The chain runs to 291 residues: Shikimate dehydrogenase (NADP(+)) (291 aa).

Shikimate-binding positions include 26–28 (SLS) and Ser-73. Catalysis depends on Lys-77, which acts as the Proton acceptor. Shikimate-binding residues include Asn-98 and Asp-113. Residues 137–141 (GAGGA) and Val-238 each bind NADP(+). Shikimate is bound at residue Tyr-240. Gly-261 lines the NADP(+) pocket.

The protein belongs to the shikimate dehydrogenase family. As to quaternary structure, homodimer.

The enzyme catalyses shikimate + NADP(+) = 3-dehydroshikimate + NADPH + H(+). It functions in the pathway metabolic intermediate biosynthesis; chorismate biosynthesis; chorismate from D-erythrose 4-phosphate and phosphoenolpyruvate: step 4/7. In terms of biological role, involved in the biosynthesis of the chorismate, which leads to the biosynthesis of aromatic amino acids. Catalyzes the reversible NADPH linked reduction of 3-dehydroshikimate (DHSA) to yield shikimate (SA). The chain is Shikimate dehydrogenase (NADP(+)) from Listeria innocua serovar 6a (strain ATCC BAA-680 / CLIP 11262).